Here is a 494-residue protein sequence, read N- to C-terminus: Alpha-amylase-related protein (494 aa).

Positions methionine 1 to alanine 20 are cleaved as a signal peptide. A Pyrrolidone carboxylic acid modification is found at glutamine 21. Cysteine 48 and cysteine 104 are disulfide-bonded. Ca(2+) is bound by residues asparagine 118, glutamine 169, and aspartate 178. A disulfide bridge links cysteine 157 with cysteine 171. Arginine 206 lines the chloride pocket. The active-site Nucleophile is the aspartate 208. Histidine 212 contacts Ca(2+). Residue glutamate 245 is the Proton donor of the active site. Residues asparagine 308 and arginine 343 each coordinate chloride. Disulfide bonds link cysteine 376–cysteine 382, cysteine 418–cysteine 441, and cysteine 448–cysteine 460.

This sequence belongs to the glycosyl hydrolase 13 family. Monomer. Ca(2+) is required as a cofactor. Requires chloride as cofactor.

The protein resides in the secreted. It catalyses the reaction Endohydrolysis of (1-&gt;4)-alpha-D-glucosidic linkages in polysaccharides containing three or more (1-&gt;4)-alpha-linked D-glucose units.. In Drosophila lini (Fruit fly), this protein is Alpha-amylase-related protein (Amyrel).